The primary structure comprises 178 residues: 3-hydroxyacyl-[acyl-carrier-protein] dehydratase FabZ (178 aa).

His-54 is an active-site residue.

It belongs to the thioester dehydratase family. FabZ subfamily.

The protein localises to the cytoplasm. It carries out the reaction a (3R)-hydroxyacyl-[ACP] = a (2E)-enoyl-[ACP] + H2O. Functionally, involved in unsaturated fatty acids biosynthesis. Catalyzes the dehydration of short chain beta-hydroxyacyl-ACPs and long chain saturated and unsaturated beta-hydroxyacyl-ACPs. The protein is 3-hydroxyacyl-[acyl-carrier-protein] dehydratase FabZ of Yersinia enterocolitica.